A 427-amino-acid polypeptide reads, in one-letter code: Glutamate-1-semialdehyde 2,1-aminomutase (427 aa).

The residue at position 265 (lysine 265) is an N6-(pyridoxal phosphate)lysine.

Belongs to the class-III pyridoxal-phosphate-dependent aminotransferase family. HemL subfamily. In terms of assembly, homodimer. Pyridoxal 5'-phosphate is required as a cofactor.

It is found in the cytoplasm. It catalyses the reaction (S)-4-amino-5-oxopentanoate = 5-aminolevulinate. Its pathway is porphyrin-containing compound metabolism; protoporphyrin-IX biosynthesis; 5-aminolevulinate from L-glutamyl-tRNA(Glu): step 2/2. The polypeptide is Glutamate-1-semialdehyde 2,1-aminomutase (Photorhabdus laumondii subsp. laumondii (strain DSM 15139 / CIP 105565 / TT01) (Photorhabdus luminescens subsp. laumondii)).